Consider the following 137-residue polypeptide: Putative pre-16S rRNA nuclease (137 aa).

The protein belongs to the YqgF nuclease family.

It is found in the cytoplasm. Could be a nuclease involved in processing of the 5'-end of pre-16S rRNA. The chain is Putative pre-16S rRNA nuclease from Clostridium kluyveri (strain NBRC 12016).